The sequence spans 132 residues: Small ribosomal subunit protein uS8 (132 aa).

The protein belongs to the universal ribosomal protein uS8 family. As to quaternary structure, part of the 30S ribosomal subunit. Contacts proteins S5 and S12.

In terms of biological role, one of the primary rRNA binding proteins, it binds directly to 16S rRNA central domain where it helps coordinate assembly of the platform of the 30S subunit. The chain is Small ribosomal subunit protein uS8 from Geobacillus sp. (strain WCH70).